The sequence spans 536 residues: MSYSIGIDFGTASGRVILADTSNGHIISRYEEDYANGTYMNSLYDKPLPENYFLQNADDYLQILEQGVQFVLEDSKVNKNDVVGIGVDFTSSTIIFLDEQFEPLHRHEDLKTNPHAYVKLWKHHGAQDEANYMIQMSKNKNWLDYYGSSVNSEWMIPKILEVKHEAPEILRRARYIMEAGDYITSILTNSNIRSNCGIGFKGFWDNEAGFNYDFFHSVDPDLPKIVKEKCEAPIISIGESAGRLCKDYQQIWGLSQDVQVSPFIIDAHSGVLGVGAIEAGEFTAVIGTSTCHLMLDSRQVPISSITGSVKNAIIPGLYAYEAGQPAVGDLFEYSKNQAPKHIVDQANEHHMHVLNYLEELASHIRIEEQHVVVLDWLNGNRSILSNSHLTGSIFGLTLQTPYEMIHRAYIEATAFGTKLIMKQFEDNHIPVHTVYASGGIPQKSKLLVEIYANVLNKRVVVIDSSNASALGAAMLGANVGNAYSTLKEAALSMKQPIAYIQEPEIQKVQAYKPLYHKYCELHDLLGRQYPELSYLI.

This sequence belongs to the ribulokinase family.

It catalyses the reaction D-ribulose + ATP = D-ribulose 5-phosphate + ADP + H(+). The catalysed reaction is L-ribulose + ATP = L-ribulose 5-phosphate + ADP + H(+). Its pathway is carbohydrate degradation; L-arabinose degradation via L-ribulose; D-xylulose 5-phosphate from L-arabinose (bacterial route): step 2/3. This is Ribulokinase from Staphylococcus epidermidis (strain ATCC 35984 / DSM 28319 / BCRC 17069 / CCUG 31568 / BM 3577 / RP62A).